Here is a 223-residue protein sequence, read N- to C-terminus: Protein DEHYDRATION-INDUCED 19 homolog 3 (223 aa).

Position 114 is a phosphothreonine (T114). Phosphoserine is present on S116.

Belongs to the Di19 family. In terms of processing, phosphorylated in vitro by CPK3 or CPK11. As to expression, expressed in seedlings, roots, leaves, stems, flowers and siliques.

Its subcellular location is the nucleus. The protein is Protein DEHYDRATION-INDUCED 19 homolog 3 (DI19-3) of Arabidopsis thaliana (Mouse-ear cress).